We begin with the raw amino-acid sequence, 103 residues long: Large ribosomal subunit protein uL24 (103 aa).

It belongs to the universal ribosomal protein uL24 family. As to quaternary structure, part of the 50S ribosomal subunit.

Functionally, one of two assembly initiator proteins, it binds directly to the 5'-end of the 23S rRNA, where it nucleates assembly of the 50S subunit. One of the proteins that surrounds the polypeptide exit tunnel on the outside of the subunit. This chain is Large ribosomal subunit protein uL24, found in Rhizobium meliloti (strain 1021) (Ensifer meliloti).